Consider the following 699-residue polypeptide: Polyribonucleotide nucleotidyltransferase (699 aa).

Mg(2+) is bound by residues D485 and D491. A KH domain is found at 552–611; that stretch reads PRITVIKINPEKIRDVIGKGGAVIRALTEETGTTIELEDDGTVKIASSNGEATKEAIRRI. Residues 621-689 form the S1 motif domain; that stretch reads GRIYNGKVIR…RQGRVRLSIK (69 aa).

This sequence belongs to the polyribonucleotide nucleotidyltransferase family. Component of the RNA degradosome, which is a multiprotein complex involved in RNA processing and mRNA degradation. Mg(2+) is required as a cofactor.

The protein localises to the cytoplasm. The catalysed reaction is RNA(n+1) + phosphate = RNA(n) + a ribonucleoside 5'-diphosphate. Involved in mRNA degradation. Catalyzes the phosphorolysis of single-stranded polyribonucleotides processively in the 3'- to 5'-direction. The sequence is that of Polyribonucleotide nucleotidyltransferase from Shewanella baltica (strain OS223).